Reading from the N-terminus, the 273-residue chain is Type II restriction enzyme HgiCII (273 aa).

The protein belongs to the TdeIII type II restriction endonuclease family.

The enzyme catalyses Endonucleolytic cleavage of DNA to give specific double-stranded fragments with terminal 5'-phosphates.. In terms of biological role, a P subtype restriction enzyme that recognizes the double-stranded sequence 5'-GGWCC-3' and cleaves after G-1. The sequence is that of Type II restriction enzyme HgiCII from Herpetosiphon aurantiacus (Herpetosiphon giganteus).